A 393-amino-acid polypeptide reads, in one-letter code: 1-deoxy-D-xylulose 5-phosphate reductoisomerase (393 aa).

NADPH contacts are provided by Thr10, Gly11, Ser12, Ile13, Arg37, and Asn124. Lys125 serves as a coordination point for 1-deoxy-D-xylulose 5-phosphate. Glu126 is a binding site for NADPH. Asp150 is a binding site for Mn(2+). 1-deoxy-D-xylulose 5-phosphate is bound by residues Ser151, Glu152, Ser182, and His205. Residue Glu152 participates in Mn(2+) binding. Gly211 lines the NADPH pocket. Positions 218, 223, 224, and 227 each coordinate 1-deoxy-D-xylulose 5-phosphate. A Mn(2+)-binding site is contributed by Glu227.

Belongs to the DXR family. The cofactor is Mg(2+). Mn(2+) is required as a cofactor.

It catalyses the reaction 2-C-methyl-D-erythritol 4-phosphate + NADP(+) = 1-deoxy-D-xylulose 5-phosphate + NADPH + H(+). Its pathway is isoprenoid biosynthesis; isopentenyl diphosphate biosynthesis via DXP pathway; isopentenyl diphosphate from 1-deoxy-D-xylulose 5-phosphate: step 1/6. Functionally, catalyzes the NADPH-dependent rearrangement and reduction of 1-deoxy-D-xylulose-5-phosphate (DXP) to 2-C-methyl-D-erythritol 4-phosphate (MEP). The chain is 1-deoxy-D-xylulose 5-phosphate reductoisomerase from Nitrosococcus oceani (strain ATCC 19707 / BCRC 17464 / JCM 30415 / NCIMB 11848 / C-107).